We begin with the raw amino-acid sequence, 448 residues long: Probable ribonuclease FAU-1 (448 aa).

This sequence belongs to the FAU-1 family.

Its function is as follows. Probable RNase involved in rRNA stability through maturation and/or degradation of precursor rRNAs. Binds to RNA in loop regions with AU-rich sequences. This Pyrobaculum calidifontis (strain DSM 21063 / JCM 11548 / VA1) protein is Probable ribonuclease FAU-1.